A 290-amino-acid chain; its full sequence is MYG1 protein CPn_0489/CP_0265/CPj0489/CpB0509 (290 aa).

The protein belongs to the MYG1 family.

This chain is MYG1 protein CPn_0489/CP_0265/CPj0489/CpB0509, found in Chlamydia pneumoniae (Chlamydophila pneumoniae).